Here is a 285-residue protein sequence, read N- to C-terminus: Nucleotide-binding protein PFL_0912 (285 aa).

8–15 (GRSGSGKS) contacts ATP. 60 to 63 (DARN) is a binding site for GTP.

This sequence belongs to the RapZ-like family.

Displays ATPase and GTPase activities. The polypeptide is Nucleotide-binding protein PFL_0912 (Pseudomonas fluorescens (strain ATCC BAA-477 / NRRL B-23932 / Pf-5)).